Here is a 205-residue protein sequence, read N- to C-terminus: MATPLGWSKAGSGSVCLAFDQLRDVIESQEELIHQLRNVMVLQDENFVSKEEFQAVEKKLVEEKAAHAKTKVLLAKEEEKLQFALGEVEVLSKQLEKEKLAFEKALSSVKSKVLQESSKKDQLITKCNEIESHIIKQEDILNGKENEIKELQQVISQQKQIFRNHMSDFRIQKQQESYMAQVLDQKHKKASGTRQAHSHQHPREK.

Positions 17–166 (LAFDQLRDVI…QQKQIFRNHM (150 aa)) form a coiled coil. Residues 138–185 (EDILNGKENEIKELQQVISQQKQIFRNHMSDFRIQKQQESYMAQVLDQ) form a required for interaction with CBX5 and TBPL1 region. Positions 180 to 205 (AQVLDQKHKKASGTRQAHSHQHPREK) are disordered. A compositionally biased stretch (basic residues) spans 186–205 (KHKKASGTRQAHSHQHPREK).

This sequence belongs to the SPATA24 family. As to quaternary structure, homodimer. Interacts with CBX3, CBX5, GMNN, GTF2B, TBPL1 and the polycomb proteins PHCF2, RNF2 and SCMH1 but not with CBX1 or PCGF2.

It localises to the cytoplasm. It is found in the nucleus. The protein resides in the nucleolus. Its subcellular location is the nucleoplasm. Functionally, binds DNA with high affinity but does not bind to TATA boxes. Synergises with GMNN and TBP in activation of TATA box-containing promoters and with GMNN and TBPL1 in activation of the NF1 TATA-less promoter. May play a role in cytoplasm movement and removal during spermiogenesis. The chain is Spermatogenesis-associated protein 24 (SPATA24) from Macaca fascicularis (Crab-eating macaque).